We begin with the raw amino-acid sequence, 246 residues long: Biosynthetic peptidoglycan transglycosylase (246 aa).

The chain crosses the membrane as a helical span at residues 27–47 (VVFCFFFAVFALLLIFRFVPI).

This sequence belongs to the glycosyltransferase 51 family.

Its subcellular location is the cell inner membrane. It carries out the reaction [GlcNAc-(1-&gt;4)-Mur2Ac(oyl-L-Ala-gamma-D-Glu-L-Lys-D-Ala-D-Ala)](n)-di-trans,octa-cis-undecaprenyl diphosphate + beta-D-GlcNAc-(1-&gt;4)-Mur2Ac(oyl-L-Ala-gamma-D-Glu-L-Lys-D-Ala-D-Ala)-di-trans,octa-cis-undecaprenyl diphosphate = [GlcNAc-(1-&gt;4)-Mur2Ac(oyl-L-Ala-gamma-D-Glu-L-Lys-D-Ala-D-Ala)](n+1)-di-trans,octa-cis-undecaprenyl diphosphate + di-trans,octa-cis-undecaprenyl diphosphate + H(+). The protein operates within cell wall biogenesis; peptidoglycan biosynthesis. Functionally, peptidoglycan polymerase that catalyzes glycan chain elongation from lipid-linked precursors. In Haemophilus influenzae (strain ATCC 51907 / DSM 11121 / KW20 / Rd), this protein is Biosynthetic peptidoglycan transglycosylase.